We begin with the raw amino-acid sequence, 274 residues long: Large ribosomal subunit protein uL2 (274 aa).

The segment at Val223–Lys274 is disordered.

The protein belongs to the universal ribosomal protein uL2 family. Part of the 50S ribosomal subunit. Forms a bridge to the 30S subunit in the 70S ribosome.

One of the primary rRNA binding proteins. Required for association of the 30S and 50S subunits to form the 70S ribosome, for tRNA binding and peptide bond formation. It has been suggested to have peptidyltransferase activity; this is somewhat controversial. Makes several contacts with the 16S rRNA in the 70S ribosome. This is Large ribosomal subunit protein uL2 from Aliivibrio fischeri (strain ATCC 700601 / ES114) (Vibrio fischeri).